Reading from the N-terminus, the 333-residue chain is SPbeta prophage-derived recombinase-like protein YomM (333 aa).

In terms of domain architecture, Core-binding (CB) spans 30 to 113; the sequence is EEHRNLVQEF…GVSSLNNYIE (84 aa). Positions 142–332 constitute a Tyr recombinase domain; that stretch reads YEKVKVTYDD…DFEEEKNQIF (191 aa). Active-site residues include arginine 180, lysine 211, histidine 281, and histidine 308. The O-(3'-phospho-DNA)-tyrosine intermediate role is filled by tyrosine 319.

Belongs to the 'phage' integrase family.

This is SPbeta prophage-derived recombinase-like protein YomM (yomM) from Bacillus subtilis (strain 168).